The primary structure comprises 296 residues: Ribosomal RNA small subunit methyltransferase H (296 aa).

Residues 38-40 (GAH), glutamate 57, phenylalanine 80, aspartate 103, and histidine 110 contribute to the S-adenosyl-L-methionine site.

Belongs to the methyltransferase superfamily. RsmH family.

The protein resides in the cytoplasm. The enzyme catalyses cytidine(1402) in 16S rRNA + S-adenosyl-L-methionine = N(4)-methylcytidine(1402) in 16S rRNA + S-adenosyl-L-homocysteine + H(+). In terms of biological role, specifically methylates the N4 position of cytidine in position 1402 (C1402) of 16S rRNA. This chain is Ribosomal RNA small subunit methyltransferase H, found in Borrelia garinii subsp. bavariensis (strain ATCC BAA-2496 / DSM 23469 / PBi) (Borreliella bavariensis).